The primary structure comprises 1714 residues: Bifunctional glutamate/proline--tRNA ligase (1714 aa).

The disordered stretch occupies residues 166 to 191 (DAKVKRSPQSSKEQTPAKTGERKQEG). The segment at 170-754 (KRSPQSSKEQ…ASELDSQISQ (585 aa)) is glutamate--tRNA ligase. The segment covering 172-182 (SPQSSKEQTPA) has biased composition (polar residues). Positions 209 to 220 (PPEASGYLHIGH) match the 'HIGH' region motif. The short motif at 438 to 442 (VLSKR) is the 'KMSKS' region element. Disordered regions lie at residues 718 to 754 (PTSG…QISQ), 791 to 817 (GKDW…ANDA), and 943 to 962 (GTTA…EKNP). 2 stretches are compositionally biased toward low complexity: residues 734-746 (KASS…GQAS) and 800-817 (SASS…ANDA). 5 WHEP-TRS domains span residues 744–800 (QASE…GQTS), 816–872 (DAVS…GTVP), 890–946 (SVAQ…GTTA), 969–1025 (TVNT…GTVA), and 1044–1100 (DVGS…DAKS). The tract at residues 755–1201 (QGDLVRDLKS…KPAKPVKKEP (447 aa)) is 6 X 57 AA approximate repeats. Disordered regions lie at residues 1093-1119 (DWTP…SPAK) and 1168-1210 (FPVA…GAVK). The span at 1094–1109 (WTPDAKSEPAVVKKEA) shows a compositional bias: basic and acidic residues. Residue S1110 is modified to Phosphoserine. The region spanning 1118–1174 (AKDELTQEINAQGEKVRAAKGNKAAKEVIDAEVAKLLALKAKYKEVTGTDFPVAGRG) is the WHEP-TRS 6 domain. Positions 1172 to 1181 (GRGGGGGGGS) are enriched in gly residues. A proline--tRNA ligase region spans residues 1207–1714 (GAVKKQTRLG…KFYTLFGRSY (508 aa)). Residues 1322–1324 (TSE) and R1353 contribute to the L-proline site. R1353, E1355, R1364, T1365, Q1438, and T1441 together coordinate ATP. Q1438 provides a ligand contact to Mg(2+). H1443 lines the L-proline pocket. ATP-binding residues include T1476 and R1478. C1648, C1653, and C1695 together coordinate Zn(2+).

This sequence in the N-terminal section; belongs to the class-I aminoacyl-tRNA synthetase family. Glutamate--tRNA ligase type 2 subfamily. In the C-terminal section; belongs to the class-II aminoacyl-tRNA synthetase family. In terms of assembly, component of the multisynthetase complex which is comprised of a bifunctional glutamyl-prolyl-tRNA synthetase, the monospecific isoleucyl, leucyl, glutaminyl, methionyl, lysyl, arginyl, and aspartyl-tRNA synthetases as well as three auxiliary proteins, p18, p48 and p43.

The enzyme catalyses tRNA(Glu) + L-glutamate + ATP = L-glutamyl-tRNA(Glu) + AMP + diphosphate. It catalyses the reaction tRNA(Pro) + L-proline + ATP = L-prolyl-tRNA(Pro) + AMP + diphosphate. Functionally, catalyzes the attachment of both L-glutamate and L-proline to their cognate tRNAs in a two-step reaction where the amino acid is first activated by ATP to form a covalent intermediate with AMP. Subsequently, the activated amino acid is transferred to the acceptor end of the cognate tRNA to form L-glutamyl-tRNA(Glu) and L-prolyl-tRNA(Pro). The polypeptide is Bifunctional glutamate/proline--tRNA ligase (Drosophila melanogaster (Fruit fly)).